The following is a 430-amino-acid chain: Probable ribosomal RNA small subunit methyltransferase B (430 aa).

Residues Cys246–Lys252, Asp270, Asp299, and Asp318 contribute to the S-adenosyl-L-methionine site. Cys371 serves as the catalytic Nucleophile.

It belongs to the class I-like SAM-binding methyltransferase superfamily. RsmB/NOP family.

The protein localises to the cytoplasm. The enzyme catalyses cytidine(967) in 16S rRNA + S-adenosyl-L-methionine = 5-methylcytidine(967) in 16S rRNA + S-adenosyl-L-homocysteine + H(+). Functionally, specifically methylates the cytosine at position 967 (m5C967) of 16S rRNA. This chain is Probable ribosomal RNA small subunit methyltransferase B, found in Coxiella burnetii (strain RSA 493 / Nine Mile phase I).